Consider the following 518-residue polypeptide: Zinc finger protein 449 (518 aa).

Residues 30 to 112 enclose the SCAN box domain; it reads RQRFRQFQYR…SLIEDLQREL (83 aa). Positions 292-304 are enriched in polar residues; it reads NPTLGETPENSNL. Positions 292 to 325 are disordered; that stretch reads NPTLGETPENSNLEEPLNPKPHKKKSPGEKPHRC. C2H2-type zinc fingers lie at residues 323-345, 351-373, 379-401, 407-429, 435-457, 463-485, and 491-513; these read HRCPQCGKCFARKSQLTGHQRIH, HKCPECGKRFLRSSDLYRHQRLH, YECTVCKKRFTRRSHLIGHQRTH, YKCLECGKSFCHGSSLKRHLKTH, HRCHNCGKSFSRLTALTLHQRTH, FKCNYCGKSFRQRPSLVIHLRIH, and YKCTHCSKSFRQRAGLIMHQVTH.

The protein belongs to the krueppel C2H2-type zinc-finger protein family.

The protein resides in the nucleus. In terms of biological role, may be involved in transcriptional regulation. The sequence is that of Zinc finger protein 449 (ZNF449) from Pan troglodytes (Chimpanzee).